A 118-amino-acid chain; its full sequence is Phosphoribosyl-AMP cyclohydrolase (118 aa).

Mg(2+) is bound at residue Asp-87. A Zn(2+)-binding site is contributed by Cys-88. Asp-89 and Asp-91 together coordinate Mg(2+). 2 residues coordinate Zn(2+): Cys-104 and Cys-111.

This sequence belongs to the PRA-CH family. Homodimer. Mg(2+) is required as a cofactor. The cofactor is Zn(2+).

The protein localises to the cytoplasm. It catalyses the reaction 1-(5-phospho-beta-D-ribosyl)-5'-AMP + H2O = 1-(5-phospho-beta-D-ribosyl)-5-[(5-phospho-beta-D-ribosylamino)methylideneamino]imidazole-4-carboxamide. It participates in amino-acid biosynthesis; L-histidine biosynthesis; L-histidine from 5-phospho-alpha-D-ribose 1-diphosphate: step 3/9. Catalyzes the hydrolysis of the adenine ring of phosphoribosyl-AMP. This chain is Phosphoribosyl-AMP cyclohydrolase, found in Corynebacterium glutamicum (strain ATCC 13032 / DSM 20300 / JCM 1318 / BCRC 11384 / CCUG 27702 / LMG 3730 / NBRC 12168 / NCIMB 10025 / NRRL B-2784 / 534).